The primary structure comprises 362 residues: P2Y purinoceptor 1 (362 aa).

The Extracellular portion of the chain corresponds to 1–40 (MTEALISAALNGTQPELLAGGWAAGNATTKCSLTKTGFQF). N-linked (GlcNAc...) asparagine glycosylation is found at Asn11 and Asn26. Intrachain disulfides connect Cys31/Cys285 and Cys113/Cys191. Lys35 lines the ADP pocket. The helical transmembrane segment at 41 to 63 (YYLPTVYILVFITGFLGNSVAIW) threads the bilayer. Over 64–76 (MFVFHMRPWSGIS) the chain is Cytoplasmic. A helical membrane pass occupies residues 77–98 (VYMFNLALADFLYVLTLPALIF). The Extracellular portion of the chain corresponds to 99–114 (YYFNKTDWIFGDVMCK). N-linked (GlcNAc...) asparagine glycosylation is present at Asn102. The helical transmembrane segment at 115-136 (LQRFIFHVNLYGSILFLTCISV) threads the bilayer. Residues 137-155 (HRYTGVVHPLKSLGRLKKK) are Cytoplasmic-facing. Residues 156–177 (NAVYVSSLVWALVVAVIAPILF) traverse the membrane as a helical segment. Residues 178 to 203 (YSGTGVRRNKTITCYDTTADEYLRSY) lie on the Extracellular side of the membrane. N-linked (GlcNAc...) asparagine glycosylation is present at Asn186. Residue 192-194 (YDT) participates in ADP binding. A helical transmembrane segment spans residues 204–226 (FVYSMCTTVFMFCIPFIVILGCY). Residues 227 to 249 (GLIVKALIYKDLDNSPLRRKSIY) are Cytoplasmic-facing. Residues 250–273 (LVIIVLTVFAVSYLPFHVMKTLNL) form a helical membrane-spanning segment. Residues 272–276 (NLRAR), 292–295 (YATY), and Arg299 each bind ADP. Residues 274 to 292 (RARLDFQTPQMCAFNDKVY) are Extracellular-facing. Residues 293–314 (ATYQVTRGLASLNSCVDPILYF) traverse the membrane as a helical segment. Residues 315 to 362 (LAGDTFRRRLSRATRKSSRRSEPNVQSKSEEMTLNILTEYKQNGDTSL) are Cytoplasmic-facing.

This sequence belongs to the G-protein coupled receptor 1 family. In terms of tissue distribution, brain, spinal cord, gastrointestinal tract, spleen and leg muscle. Is not detected in the heart, liver, stomach, lung and kidney.

The protein localises to the cell membrane. Functionally, receptor for extracellular adenine nucleotides such as ADP. In platelets, binding to ADP leads to mobilization of intracellular calcium ions via activation of phospholipase C, a change in platelet shape, and ultimately platelet aggregation. The chain is P2Y purinoceptor 1 (P2RY1) from Gallus gallus (Chicken).